Reading from the N-terminus, the 131-residue chain is Small ribosomal subunit protein uS9 (131 aa).

The protein belongs to the universal ribosomal protein uS9 family.

In Glaesserella parasuis serovar 5 (strain SH0165) (Haemophilus parasuis), this protein is Small ribosomal subunit protein uS9.